The primary structure comprises 333 residues: Flotillin-like protein FloA (333 aa).

Residues 9–29 (IVLIVGGIIFLILFFHYVPFF) form a helical membrane-spanning segment.

It belongs to the flotillin-like FloA family. As to quaternary structure, homooligomerizes.

The protein localises to the cell membrane. The protein resides in the membrane raft. Functionally, found in functional membrane microdomains (FMM) that may be equivalent to eukaryotic membrane rafts. FMMs are highly dynamic and increase in number as cells age. Flotillins are thought to be important factors in membrane fluidity. The polypeptide is Flotillin-like protein FloA (Bacteroides thetaiotaomicron (strain ATCC 29148 / DSM 2079 / JCM 5827 / CCUG 10774 / NCTC 10582 / VPI-5482 / E50)).